The chain runs to 519 residues: Na(+)/H(+) exchange regulatory cofactor NHE-RF3 (519 aa).

PDZ domains follow at residues 9-90 (ECKL…LDGD), 134-215 (RLCY…VDKE), and 243-323 (IVEM…VDKE). Residues Ser148, Ser192, Ser250, Ser334, and Ser348 each carry the phosphoserine modification. A disordered region spans residues 347–374 (GSVKEAPAPTPTSLEVSSPPDTTEEVDH). Residues 357 to 367 (PTSLEVSSPPD) are compositionally biased toward polar residues. The 81-residue stretch at 378-458 (LCRLAKGENG…NVTLLVCGKK (81 aa)) folds into the PDZ 4 domain. Thr451 bears the Phosphothreonine mark. The interval 473-519 (SLADPPDTPPDSKEGIVVESKHDSHMAKERAHSTASHSSSNSEDTEM) is disordered. Over residues 482–504 (PDSKEGIVVESKHDSHMAKERAH) the composition is skewed to basic and acidic residues. Phosphoserine is present on residues Ser492, Ser508, Ser510, Ser511, Ser512, and Ser514. Residues 505–519 (STASHSSSNSEDTEM) show a composition bias toward low complexity.

This sequence belongs to the NHER family. As to quaternary structure, interacts with PDZK1IP1 and ABCC2. Binds to the C-terminal region of SLC26A3. Interacts (via PDZ domains 1 and 3) with SCARB1 (C-terminal domain). Forms a heterodimeric complex with NHERF1. Interacts with AKAP2, BCR, CFTR, SLCO1A1, SLC22A12, SLC22A4, SLC22A5, NHERF2 and SLC17A1. Component of a complex, composed of PDZK1, SYNGAP1, KLHL17 and NMDA receptors. Interacts (via PDZ1 domain) directly with KLHL17; the interaction is important for integrity of actin cytoskeleton structures in neurons. Interacts (via C-terminal PDZ domain) with SLC26A6 (via C-terminal domain). Interacts (via C-terminal PDZ domain) with SLC9A3 (via C-terminal domain). Interacts (via the first PDZ domain) with PTGIR (via non-isoprenylated C-terminus). Interacts (via PDZ domains 1 and 3) with SLC5A8 (via PDZ-binding motif); interaction increases nicotinate transport activity of SLC5A8.

The protein resides in the membrane. It localises to the cell membrane. A scaffold protein that connects plasma membrane proteins and regulatory components, regulating their surface expression in epithelial cells apical domains. May be involved in the coordination of a diverse range of regulatory processes for ion transport and second messenger cascades. In complex with NHERF1, may cluster proteins that are functionally dependent in a mutual fashion and modulate the trafficking and the activity of the associated membrane proteins. May play a role in the cellular mechanisms associated with multidrug resistance through its interaction with ABCC2 and PDZK1IP1. May potentiate the CFTR chloride channel activity. Required for normal cell-surface expression of SCARB1. Plays a role in maintaining normal plasma cholesterol levels via its effects on SCARB1. Plays a role in the normal localization and function of the chloride-anion exchanger SLC26A6 to the plasma membrane in the brush border of the proximal tubule of the kidney. May be involved in the regulation of proximal tubular Na(+)-dependent inorganic phosphate cotransport therefore playing an important role in tubule function. This chain is Na(+)/H(+) exchange regulatory cofactor NHE-RF3 (PDZK1), found in Pongo abelii (Sumatran orangutan).